A 529-amino-acid chain; its full sequence is Transcription factor kayak (529 aa).

Polar residues predominate over residues 118 to 134 (LQGTDSDNSNASWADAQ). 2 disordered regions span residues 118-166 (LQGT…SVNG) and 180-239 (NAGR…CRKR). 2 stretches are compositionally biased toward low complexity: residues 142 to 153 (TDTSSAHTDSTS) and 182 to 201 (GRGSTQGSNTNTSNSATPAR). A bZIP domain is found at 219 to 282 (EEKRRIRRER…NQLEFFLRAH (64 aa)). The interval 221–240 (KRRIRRERNKQAAARCRKRR) is basic motif. The leucine-zipper stretch occupies residues 247–275 (LTYEVEQLEKKRDGLKKEMETLTDVKNQL). Disordered regions lie at residues 311-390 (AGSC…PMST) and 493-529 (DGGTGLTPVSGPLVPSQNKHPLELPTPTAEPSKLVSL). Low complexity predominate over residues 315 to 332 (DSGSSSHHNNNSNDSSNG). Polar residues predominate over residues 340–350 (SLNSTGRSNSP). A Phosphoserine modification is found at S349. The segment covering 363–375 (DGGLDSSCLLDQD) has biased composition (low complexity). Pro residues predominate over residues 376-387 (GPPPSKRFPLPP).

This sequence belongs to the bZIP family. Fos subfamily. Homodimer. Heterodimer with Jra. The kay-Jra heterodimer binds more stably to the AP-1 site than either of the two proteins alone.

The protein resides in the nucleus. Developmentally regulated transcription factor AP-1 binds and recognizes the enhancer DNA sequence: 5'-TGA[CG]TCA-3'. May play a role in the function or determination of a particular subset of cells in the developing embryo. Is able to carry out its function either independently of or in conjunction with Jra. The sequence is that of Transcription factor kayak from Drosophila ananassae (Fruit fly).